The sequence spans 1460 residues: Cilia- and flagella-associated protein 43 (1460 aa).

WD repeat units follow at residues E46–C87, V91–K132, S184–Y221, R303–T342, I428–S468, M529–P569, F589–S628, E911–V951, and N1129–V1170. Coiled-coil stretches lie at residues V1170–A1214 and L1399–A1446.

The protein belongs to the CFAP43 family.

The protein resides in the cell projection. The protein localises to the cilium. It localises to the flagellum. Its subcellular location is the cytoplasm. It is found in the cytoskeleton. The protein resides in the flagellum axoneme. Its function is as follows. Flagellar protein involved in flagellum axoneme organization and function. This Trypanosoma brucei brucei (strain 927/4 GUTat10.1) protein is Cilia- and flagella-associated protein 43.